A 313-amino-acid chain; its full sequence is Intracellular endo-alpha-(1-&gt;5)-L-arabinanase (313 aa).

Catalysis depends on D27, which acts as the Proton acceptor. Residues D27, G105, 144–147 (NAID), and 164–166 (SFW) contribute to the substrate site. The active-site Proton donor is E201. Position 271 (H271) interacts with Ca(2+).

The protein belongs to the glycosyl hydrolase 43 family. In terms of assembly, monomer. Ca(2+) serves as cofactor.

It is found in the cytoplasm. The catalysed reaction is Endohydrolysis of (1-&gt;5)-alpha-arabinofuranosidic linkages in (1-&gt;5)-arabinans.. It functions in the pathway glycan metabolism; L-arabinan degradation. Involved in the degradation of arabinan and is a key enzyme in the complete degradation of the plant cell wall. Catalyzes the cleavage of endo alpha-(1-&gt;5)-L-arabinofuranosyl residues in debranched arabinan. In Geobacillus thermodenitrificans, this protein is Intracellular endo-alpha-(1-&gt;5)-L-arabinanase (abn-ts).